Consider the following 363-residue polypeptide: Putative type I specificity subunit S.MpnORF507P (363 aa).

It belongs to the type-I restriction system S methylase family. The methyltransferase is composed of M and S polypeptides.

Functionally, the specificity (S) subunit of a type I methyltransferase (MTase); this subunit dictates DNA sequence specificity. The single R subunit has multiple frameshifts and is probably not expressed. The chain is Putative type I specificity subunit S.MpnORF507P from Mycoplasma pneumoniae (strain ATCC 29342 / M129 / Subtype 1) (Mycoplasmoides pneumoniae).